Here is a 783-residue protein sequence, read N- to C-terminus: MSSDWDEIKRLAADFQKAQLTSTLQKLSERNCIEIVTLLLEKQLLDVVFTNDGKEYITPEHLEREIQDELYANGGRANLVEVSKTLNVDLSRIEALAERIAADNPQIHLMLGQLIDEDYITHIAQEINEKLSQRGEISISDLTSQFDLPSEFLQHNVMEKHLGKTIKGRQDATNPRVFFTQAYIQRCKAKIRGALAAITKPTNVSVILQQINVQEKIFHSLLDEIMPAGQVTSKQANAQYVPHIYAKTQAEWVNSFYKQNSFLEYEAINKLGISDAKAYIRKQFPNEQFLFLKRVALGAHLIELTVVSALNECSATKQYLDLATILPSNLSEEDIEEAFDAVMAQKHCNPSQFVYLQSIVFSQAYLTQLIQPCHDMAHALAKAAIDSGAYQQYIVEKTLAQKGSNSSANFDADDDGKVDKRDERRKKAASGKAGGGAQGRETKTKSTKKHQRGRAAAHNHDSDDDEETTQQSAGSSRKSVKPLELVKSSDVINRIKSTLEEEGLEHLAKPIAGLFVNQLNQAALAKAQELYEATPQTNRRQTHAAIQERVNTLLVDLRLYEKGIKLFNTDTQAQLIKYLLKSLGNDICNELTLYVAAECSLSVKMTNLNVDQRIKLIQECDAQYRNALLEQNKALNKSIEDFELATEAVLKTCSMIIKKADKKKDRALIVSHKEKLMQQLSECREPALLLHLAALILFTTITGCILHASGKFVSTILQHIRPTLNESQNALLLRYHDLVLQMLQQGTTDSPESKSLNEQLQTLQAEVVDLAQNFSRVSVSKAD.

The disordered stretch occupies residues 404–482 (SNSSANFDAD…AGSSRKSVKP (79 aa)). The span at 445–457 (KSTKKHQRGRAAA) shows a compositional bias: basic residues.

The protein belongs to the UFL1 family.

E3 UFM1-protein ligase that mediates ufmylation of target proteins. The chain is E3 UFM1-protein ligase 1 homolog from Drosophila mojavensis (Fruit fly).